The chain runs to 47 residues: Photosystem II reaction center protein K (47 aa).

Positions 1–10 (MNIGFDMILA) are excised as a propeptide. The chain crosses the membrane as a helical span at residues 22 to 42 (LVDVLPVIPLLFLLLAFVWQA).

This sequence belongs to the PsbK family. PSII is composed of 1 copy each of membrane proteins PsbA, PsbB, PsbC, PsbD, PsbE, PsbF, PsbH, PsbI, PsbJ, PsbK, PsbL, PsbM, PsbT, PsbX, PsbY, PsbZ, Psb30/Ycf12, at least 3 peripheral proteins of the oxygen-evolving complex and a large number of cofactors. It forms dimeric complexes.

It localises to the plastid. The protein resides in the chloroplast thylakoid membrane. One of the components of the core complex of photosystem II (PSII). PSII is a light-driven water:plastoquinone oxidoreductase that uses light energy to abstract electrons from H(2)O, generating O(2) and a proton gradient subsequently used for ATP formation. It consists of a core antenna complex that captures photons, and an electron transfer chain that converts photonic excitation into a charge separation. This Mesostigma viride (Green alga) protein is Photosystem II reaction center protein K.